The sequence spans 505 residues: Cytochrome P450 9b2 (505 aa).

Position 449 (C449) interacts with heme.

Belongs to the cytochrome P450 family. It depends on heme as a cofactor.

Its subcellular location is the endoplasmic reticulum membrane. The protein resides in the microsome membrane. Its function is as follows. May be involved in the metabolism of insect hormones and in the breakdown of synthetic insecticides. This chain is Cytochrome P450 9b2 (Cyp9b2), found in Drosophila melanogaster (Fruit fly).